Consider the following 339-residue polypeptide: MWFYSVPEVIIGVESTAHTFSLGLVSGGRVLGQVGKTYVPPAGRGIHPREAAEHHAKAAPQLFRKLIEEFNVSLGDVEAVAYSAGPGLGPALRVGAVFARALAIKLGVPLVPVHHGVAHVEIARYATGSCDPLVLLISGGHTVVAGFSDGRYRVFGETLDVAIGNAIDMFAREVGLGFPGVPAVEKCAEAAEELVAFPMPIVGQDLSYAGLTTYALQLVKRGIPLPVVCRSLVETAYYMLAEVTERALAFTKKRELVVAGGVARSRRLREILYEVGREHGAEVKFVPDEYAGDNGAMIALTGYYAYRRGIAVEPGESFVRQRWRLDTVDVPWFYDLCNR.

Residues His-115 and His-119 each contribute to the Fe cation site. Residues 136–140 (LISGG), Asp-168, Glu-185, and Ser-265 each bind substrate. Asp-293 contacts Fe cation.

Belongs to the KAE1 / TsaD family. It depends on Fe(2+) as a cofactor.

The protein resides in the cytoplasm. The enzyme catalyses L-threonylcarbamoyladenylate + adenosine(37) in tRNA = N(6)-L-threonylcarbamoyladenosine(37) in tRNA + AMP + H(+). Required for the formation of a threonylcarbamoyl group on adenosine at position 37 (t(6)A37) in tRNAs that read codons beginning with adenine. Is probably involved in the transfer of the threonylcarbamoyl moiety of threonylcarbamoyl-AMP (TC-AMP) to the N6 group of A37. The protein is tRNA N6-adenosine threonylcarbamoyltransferase of Pyrobaculum calidifontis (strain DSM 21063 / JCM 11548 / VA1).